A 528-amino-acid chain; its full sequence is Glucosidase 2 subunit beta (528 aa).

Positions 1–14 (MLLPLLLLLPMCWA) are cleaved as a signal peptide. Ser-24 is modified (phosphoserine; by FAM20C). 2 consecutive LDL-receptor class A domains span residues 37 to 71 (FTCL…AACP) and 72 to 113 (NGSF…VICE). Disulfide bonds link Cys-39/Cys-58 and Cys-56/Cys-70. Asp-49 contributes to the substrate binding site. The Ca(2+) site is built by Gln-50, Asp-53, Tyr-55, Asp-57, Asp-63, and Glu-64. Asp-53 contacts substrate. N-linked (GlcNAc...) asparagine glycosylation is present at Asn-72. Intrachain disulfides connect Cys-77–Cys-99, Cys-97–Cys-112, and Cys-100–Cys-116. Ser-89 is modified (phosphoserine; by PKC). The Ca(2+) site is built by Arg-91, Asp-94, Val-96, Asp-98, Asp-104, and Glu-105. Lys-166 is subject to N6-succinyllysine. Residue Ser-168 is modified to Phosphoserine; by FAM20C. 2 EF-hand domains span residues 209-244 (QEQE…DTDG) and 245-290 (DGAL…TDLP). Ca(2+) is bound by residues Asp-222, Asp-224, Asp-226, Thr-228, and Glu-233. Disordered regions lie at residues 234–266 (LQTH…TDAT) and 281–357 (RSEA…DKMP). Over residues 247–258 (ALSEAEAQALLS) the composition is skewed to low complexity. The segment covering 312 to 337 (TEEEEEEEEEEEEEAEEEEEEEDSEE) has biased composition (acidic residues). A compositionally biased stretch (pro residues) spans 338–348 (APPPLSPPQPA). Residues Ser-383 and Ser-390 each carry the phosphoserine; by PKC modification. Residues 413–514 (SQCYELTTNE…ELMTPAACPE (102 aa)) form the MRH domain. Residues Cys-415 and Cys-428 are joined by a disulfide bond. Ser-434 carries the phosphoserine; by PKC modification. Intrachain disulfides connect Cys-471–Cys-500 and Cys-485–Cys-512. Asn-476 is a glycosylation site (N-linked (GlcNAc...) asparagine). Positions 525 to 528 (HDEL) match the Prevents secretion from ER motif.

Heterodimer of a catalytic alpha subunit (GANAB) and a beta subunit (PRKCSH). Binds glycosylated PTPRC.

It is found in the endoplasmic reticulum. Its pathway is glycan metabolism; N-glycan metabolism. Regulatory subunit of glucosidase II that cleaves sequentially the 2 innermost alpha-1,3-linked glucose residues from the Glc(2)Man(9)GlcNAc(2) oligosaccharide precursor of immature glycoproteins. Required for efficient PKD1/Polycystin-1 biogenesis and trafficking to the plasma membrane of the primary cilia. The protein is Glucosidase 2 subunit beta of Homo sapiens (Human).